Here is a 233-residue protein sequence, read N- to C-terminus: B-cell lymphoma/leukemia 10 (233 aa).

M1 is subject to N-acetylmethionine. The CARD domain maps to 13–101 (LTEVKKDALE…QNFLIQKITD (89 aa)). Glycyl lysine isopeptide (Lys-Gly) (interchain with G-Cter in ubiquitin) cross-links involve residues K17, K31, and K63. Polar residues predominate over residues 130–141 (TNNLSRSNSDES). 2 disordered regions span residues 130–149 (TNNLSRSNSDESNFSEKQRP) and 186–233 (SFSS…LSRQ). Residue S138 is modified to Phosphoserine. The span at 195–205 (PGDPGAPPLPP) shows a compositional bias: pro residues.

In terms of assembly, homomultimer; homooligomerized following recruitment by CARD domain-containing proteins that form a nucleating helical template that recruits BCL10 via CARD-CARD interaction. Self-associates by CARD-CARD interaction and interacts with other CARD-proteins such as CARD9, CARD10, CARD11 and CARD14. Forms a complex with CARD14 and MALT1; resulting in the formation of a CBM (CARD14-BCL10-MALT1) complex. Forms a complex with CARD11 and MALT1; resulting in the formation of a CBM (CARD11-BCL10-MALT1) complex. Forms a complex with CARD9 and MALT1; resulting in the formation of a CBM (CARD9-BCL10-MALT1) complex. Found in a membrane raft complex, at least composed of BCL10, CARD11, DPP4 and IKBKB. Binds caspase-9 with its C-terminal domain. Interacts with TRAF2 and BIRC2/c-IAP2. Interacts with PELI2 and SOCS3; these interactions may be mutually exclusive. In terms of processing, phosphorylated. Phosphorylation results in dissociation from TRAF2 and binding to BIRC2/c-IAP2. Phosphorylated by IKBKB/IKKB. Ubiquitinated via both 'Lys-63'-linked and linear ('Met-1'-linked) polyubiquitin chains in response to T-cell receptor (TCR) activation. Ubiquitination is recognized by IKBKG/NEMO, the regulatory subunit of I-kappa-B kinase (IKK), and is required for TCR-induced NF-kappa-B activation. Linear ubiquitination at Lys-17, Lys-31 and Lys-63 is mediated by RNF31/HOIP; linear ubiquitination is recognized with much higher affinity than 'Lys-63'-linked ubiquitin by IKBKG/NEMO. CARD11 is required for linear ubiquitination by HOIP by promoting the targeting of BCL10 to RNF31/HOIP. Post-translationally, proteolytically cleaved by MALT1; required for T-cell activation.

It is found in the cytoplasm. Its subcellular location is the perinuclear region. It localises to the membrane raft. Plays a key role in both adaptive and innate immune signaling by bridging CARD domain-containing proteins to immune activation. Acts by channeling adaptive and innate immune signaling downstream of CARD domain-containing proteins CARD9, CARD11 and CARD14 to activate NF-kappa-B and MAP kinase p38 (MAPK11, MAPK12, MAPK13 and/or MAPK14) pathways which stimulate expression of genes encoding pro-inflammatory cytokines and chemokines. Recruited by activated CARD domain-containing proteins: homooligomerized CARD domain-containing proteins form a nucleating helical template that recruits BCL10 via CARD-CARD interaction, thereby promoting polymerization of BCL10, subsequent recruitment of MALT1 and formation of a CBM complex. This leads to activation of NF-kappa-B and MAP kinase p38 (MAPK11, MAPK12, MAPK13 and/or MAPK14) pathways which stimulate expression of genes encoding pro-inflammatory cytokines and chemokines. Activated by CARD9 downstream of C-type lectin receptors; CARD9-mediated signals are essential for antifungal immunity. Activated by CARD11 downstream of T-cell receptor (TCR) and B-cell receptor (BCR). Promotes apoptosis, pro-caspase-9 maturation and activation of NF-kappa-B via NIK and IKK. The polypeptide is B-cell lymphoma/leukemia 10 (Rattus norvegicus (Rat)).